We begin with the raw amino-acid sequence, 245 residues long: UPF0319 protein VV0984 (245 aa).

An N-terminal signal peptide occupies residues 1-20 (MRYIGKWMMLGALVSSSVFA).

It belongs to the UPF0319 family.

This is UPF0319 protein VV0984 from Vibrio vulnificus (strain YJ016).